The primary structure comprises 293 residues: Formamidopyrimidine-DNA glycosylase (293 aa).

The Schiff-base intermediate with DNA role is filled by P2. E3 serves as the catalytic Proton donor. K58 functions as the Proton donor; for beta-elimination activity in the catalytic mechanism. H104, R123, and K166 together coordinate DNA. The FPG-type zinc finger occupies 257–293; that stretch reads AVYDRESEPCRTKGCGGVVKRFVQNGRSTFCCPKCQK. Catalysis depends on R283, which acts as the Proton donor; for delta-elimination activity.

It belongs to the FPG family. In terms of assembly, monomer. Zn(2+) serves as cofactor.

It carries out the reaction Hydrolysis of DNA containing ring-opened 7-methylguanine residues, releasing 2,6-diamino-4-hydroxy-5-(N-methyl)formamidopyrimidine.. It catalyses the reaction 2'-deoxyribonucleotide-(2'-deoxyribose 5'-phosphate)-2'-deoxyribonucleotide-DNA = a 3'-end 2'-deoxyribonucleotide-(2,3-dehydro-2,3-deoxyribose 5'-phosphate)-DNA + a 5'-end 5'-phospho-2'-deoxyribonucleoside-DNA + H(+). Functionally, involved in base excision repair of DNA damaged by oxidation or by mutagenic agents. Acts as a DNA glycosylase that recognizes and removes damaged bases. Has a preference for oxidized purines, such as 7,8-dihydro-8-oxoguanine (8-oxoG). Has AP (apurinic/apyrimidinic) lyase activity and introduces nicks in the DNA strand. Cleaves the DNA backbone by beta-delta elimination to generate a single-strand break at the site of the removed base with both 3'- and 5'-phosphates. The chain is Formamidopyrimidine-DNA glycosylase from Rhodopseudomonas palustris (strain BisA53).